The primary structure comprises 157 residues: Urease accessory protein UreE (157 aa).

The protein belongs to the UreE family.

The protein resides in the cytoplasm. Its function is as follows. Involved in urease metallocenter assembly. Binds nickel. Probably functions as a nickel donor during metallocenter assembly. In Corynebacterium glutamicum (strain R), this protein is Urease accessory protein UreE.